A 414-amino-acid chain; its full sequence is Probable sugar phosphate/phosphate translocator At1g06470 (414 aa).

9 consecutive transmembrane segments (helical) span residues 72-92 (VLKT…LTLY), 101-121 (LGKF…QAVL), 172-192 (TFAT…AFAF), 197-217 (PSLK…LTVA), 224-244 (FWGF…WCMT), 259-279 (FIFM…LSLL), 303-323 (FLML…YVLV), 328-348 (AVTV…VAVF), and 354-374 (FTWL…LFNW). Residues 106 to 216 (APLLMNTIHF…VISAGVLLTV (111 aa)) form the EamA domain.

This sequence belongs to the TPT transporter family. TPT (TC 2.A.7.9) subfamily.

Its subcellular location is the membrane. The polypeptide is Probable sugar phosphate/phosphate translocator At1g06470 (Arabidopsis thaliana (Mouse-ear cress)).